We begin with the raw amino-acid sequence, 308 residues long: Quinolinate synthase (308 aa).

Iminosuccinate is bound by residues histidine 21 and serine 38. Cysteine 83 contributes to the [4Fe-4S] cluster binding site. Residues 109–111 and serine 126 contribute to the iminosuccinate site; that span reads YIN. [4Fe-4S] cluster is bound at residue cysteine 170. Iminosuccinate-binding positions include 196 to 198 and threonine 213; that span reads HPE. Cysteine 263 contacts [4Fe-4S] cluster.

It belongs to the quinolinate synthase family. Type 2 subfamily. It depends on [4Fe-4S] cluster as a cofactor.

The protein localises to the cytoplasm. It catalyses the reaction iminosuccinate + dihydroxyacetone phosphate = quinolinate + phosphate + 2 H2O + H(+). It functions in the pathway cofactor biosynthesis; NAD(+) biosynthesis; quinolinate from iminoaspartate: step 1/1. In terms of biological role, catalyzes the condensation of iminoaspartate with dihydroxyacetone phosphate to form quinolinate. The polypeptide is Quinolinate synthase (Sulfurisphaera tokodaii (strain DSM 16993 / JCM 10545 / NBRC 100140 / 7) (Sulfolobus tokodaii)).